A 122-amino-acid polypeptide reads, in one-letter code: UPF0382 membrane protein SAB0533 (122 aa).

The next 4 membrane-spanning stretches (helical) occupy residues 3–23 (LFIILGALNAMMAVGTGAFGA), 46–66 (MYHGLALLIIGVISGTTSINV), 69–89 (AGWLIFAGIIFFSGSLYILVL), and 98–118 (ITPIGGVLFIIGWIMLIIATF).

This sequence belongs to the UPF0382 family.

Its subcellular location is the cell membrane. This chain is UPF0382 membrane protein SAB0533, found in Staphylococcus aureus (strain bovine RF122 / ET3-1).